The primary structure comprises 430 residues: MLDPNLLRNEPDAVAEKLARRGFKLDVDKLRALEERRKVLQVNTENLQAERNSRSKSIGQAKARGEDIEPLRLEVNKLGEELDAAKAELESLQAEIRDIALTIPNLPADDVPVGKDENDNVEVSRWGTPREFDFDVRDHVTLGEMHAGLDFAAAVKLTGSRFVVMKGQIARMHRALSQFMLDLHTEQHGYSENYVPYLVNHDTLYGTGQLPKFAGDLFHTRPLEEEADSSNYALIPTAEVPLTNLVRDEIIDEDALPIKMTAHTPCFRSEAGSYGRDTRGLIRMHQFDKVEMVQIVRPEESMDALEEMTGHAEKVLQLLGLPYRKIVLCTGDMGFGACKTYDLEVWIPAQNTYREISSCSNVWDFQARRMQARCRSKSDKKTRLVHTLNGSGLAVGRTLVAVMENYQQADGRIEVPEVLRPYMNGLEYIG.

237–239 (TAE) contacts L-serine. 268-270 (RSE) serves as a coordination point for ATP. Residue Glu-291 participates in L-serine binding. 355 to 358 (EISS) contributes to the ATP binding site. Ser-391 contributes to the L-serine binding site.

Belongs to the class-II aminoacyl-tRNA synthetase family. Type-1 seryl-tRNA synthetase subfamily. As to quaternary structure, homodimer. The tRNA molecule binds across the dimer.

It is found in the cytoplasm. The enzyme catalyses tRNA(Ser) + L-serine + ATP = L-seryl-tRNA(Ser) + AMP + diphosphate + H(+). The catalysed reaction is tRNA(Sec) + L-serine + ATP = L-seryl-tRNA(Sec) + AMP + diphosphate + H(+). It participates in aminoacyl-tRNA biosynthesis; selenocysteinyl-tRNA(Sec) biosynthesis; L-seryl-tRNA(Sec) from L-serine and tRNA(Sec): step 1/1. Functionally, catalyzes the attachment of serine to tRNA(Ser). Is also able to aminoacylate tRNA(Sec) with serine, to form the misacylated tRNA L-seryl-tRNA(Sec), which will be further converted into selenocysteinyl-tRNA(Sec). The protein is Serine--tRNA ligase of Citrobacter koseri (strain ATCC BAA-895 / CDC 4225-83 / SGSC4696).